The sequence spans 207 residues: Ribosome maturation factor RimM (207 aa).

A PRC barrel domain is found at 114–207; the sequence is DDEYYWVDLI…RIDSDWPLDY (94 aa).

It belongs to the RimM family. Binds ribosomal protein uS19.

The protein resides in the cytoplasm. An accessory protein needed during the final step in the assembly of 30S ribosomal subunit, possibly for assembly of the head region. Essential for efficient processing of 16S rRNA. May be needed both before and after RbfA during the maturation of 16S rRNA. It has affinity for free ribosomal 30S subunits but not for 70S ribosomes. This chain is Ribosome maturation factor RimM, found in Bordetella bronchiseptica (strain ATCC BAA-588 / NCTC 13252 / RB50) (Alcaligenes bronchisepticus).